A 590-amino-acid polypeptide reads, in one-letter code: Mannosyl-oligosaccharide 1,2-alpha-mannosidase mans-2 (590 aa).

Topologically, residues 1 to 9 (MKTVRFNKQ) are cytoplasmic. The helical; Signal-anchor for type II membrane protein transmembrane segment at 10–30 (ALAILAACFIFLLCVVCYFSA) threads the bilayer. Residues 31 to 590 (SSESHNAVVV…EAHPVPVLTN (560 aa)) are Lumenal-facing. Basic and acidic residues predominate over residues 88–102 (PARVESKPPGEKTST). The tract at residues 88-112 (PARVESKPPGEKTSTEPEETGVGKA) is disordered. 4 N-linked (GlcNAc...) asparagine glycosylation sites follow: asparagine 156, asparagine 212, asparagine 373, and asparagine 402. Cysteine 423 and cysteine 456 are joined by a disulfide. Glutamate 470 (proton donor) is an active-site residue. Threonine 580 is a binding site for Ca(2+).

Belongs to the glycosyl hydrolase 47 family. The cofactor is Ca(2+).

The protein resides in the membrane. The enzyme catalyses N(4)-(alpha-D-Man-(1-&gt;2)-alpha-D-Man-(1-&gt;2)-alpha-D-Man-(1-&gt;3)-[alpha-D-Man-(1-&gt;2)-alpha-D-Man-(1-&gt;3)-[alpha-D-Man-(1-&gt;2)-alpha-D-Man-(1-&gt;6)]-alpha-D-Man-(1-&gt;6)]-beta-D-Man-(1-&gt;4)-beta-D-GlcNAc-(1-&gt;4)-beta-D-GlcNAc)-L-asparaginyl-[protein] (N-glucan mannose isomer 9A1,2,3B1,2,3) + 4 H2O = N(4)-(alpha-D-Man-(1-&gt;3)-[alpha-D-Man-(1-&gt;3)-[alpha-D-Man-(1-&gt;6)]-alpha-D-Man-(1-&gt;6)]-beta-D-Man-(1-&gt;4)-beta-D-GlcNAc-(1-&gt;4)-beta-D-GlcNAc)-L-asparaginyl-[protein] (N-glucan mannose isomer 5A1,2) + 4 beta-D-mannose. It carries out the reaction N(4)-(alpha-D-Man-(1-&gt;2)-alpha-D-Man-(1-&gt;2)-alpha-D-Man-(1-&gt;3)-[alpha-D-Man-(1-&gt;3)-[alpha-D-Man-(1-&gt;2)-alpha-D-Man-(1-&gt;6)]-alpha-D-Man-(1-&gt;6)]-beta-D-Man-(1-&gt;4)-beta-D-GlcNAc-(1-&gt;4)-beta-D-GlcNAc)-L-asparaginyl-[protein] (N-glucan mannose isomer 8A1,2,3B1,3) + 3 H2O = N(4)-(alpha-D-Man-(1-&gt;3)-[alpha-D-Man-(1-&gt;3)-[alpha-D-Man-(1-&gt;6)]-alpha-D-Man-(1-&gt;6)]-beta-D-Man-(1-&gt;4)-beta-D-GlcNAc-(1-&gt;4)-beta-D-GlcNAc)-L-asparaginyl-[protein] (N-glucan mannose isomer 5A1,2) + 3 beta-D-mannose. It participates in protein modification; protein glycosylation. Its function is as follows. Involved in the maturation of Asn-linked oligosaccharides. Progressively trim alpha-1,2-linked mannose residues from Man(9)GlcNAc(2) to produce Man(5)GlcNAc(2). This chain is Mannosyl-oligosaccharide 1,2-alpha-mannosidase mans-2, found in Caenorhabditis elegans.